A 320-amino-acid chain; its full sequence is MQTRNNFSWIKEQITRSISVSLMIYIITRASISNAYPIFAQKGYENPREATGRIVCANCHLANKPVDIEVPQTVLPDTVFEAVVRIPYDMQLKQVLANGKKGALNVGAVLILPEGFELAPPDRISPEIKEKMGNLSFQSYRPNQKNILVIGPVPGQKYSEITFPILSPDPATKKDIHFLKYPIYVGGNRGRGQIYPDGSKSNNTVYNATASGIVSKILRKEKGGYEITIADASDGRQVVDIIPPGPELLVSEGESIKFEQPLTSNPNVGGFGQGDAEIVLQDPLRVQGLLFFLASVILAQIFLVLKKKQFEKVQLSEMNF.

A signal peptide spans 1 to 35 (MQTRNNFSWIKEQITRSISVSLMIYIITRASISNA). Residues Tyr36, Cys56, Cys59, and His60 each coordinate heme. The chain crosses the membrane as a helical span at residues 286-306 (VQGLLFFLASVILAQIFLVLK).

Belongs to the cytochrome f family. As to quaternary structure, the 4 large subunits of the cytochrome b6-f complex are cytochrome b6, subunit IV (17 kDa polypeptide, petD), cytochrome f and the Rieske protein, while the 4 small subunits are PetG, PetL, PetM and PetN. The complex functions as a dimer. Heme serves as cofactor.

The protein localises to the plastid. It localises to the chloroplast thylakoid membrane. In terms of biological role, component of the cytochrome b6-f complex, which mediates electron transfer between photosystem II (PSII) and photosystem I (PSI), cyclic electron flow around PSI, and state transitions. In Lactuca sativa (Garden lettuce), this protein is Cytochrome f.